We begin with the raw amino-acid sequence, 39 residues long: Cytochrome b559 subunit beta (39 aa).

A helical membrane pass occupies residues 14-30; that stretch reads WLAIHGLAVPTVFFLGS. Histidine 18 lines the heme pocket.

Belongs to the PsbE/PsbF family. As to quaternary structure, heterodimer of an alpha subunit and a beta subunit. PSII is composed of 1 copy each of membrane proteins PsbA, PsbB, PsbC, PsbD, PsbE, PsbF, PsbH, PsbI, PsbJ, PsbK, PsbL, PsbM, PsbT, PsbX, PsbY, PsbZ, Psb30/Ycf12, at least 3 peripheral proteins of the oxygen-evolving complex and a large number of cofactors. It forms dimeric complexes. The cofactor is heme b.

The protein resides in the plastid. The protein localises to the chloroplast thylakoid membrane. Functionally, this b-type cytochrome is tightly associated with the reaction center of photosystem II (PSII). PSII is a light-driven water:plastoquinone oxidoreductase that uses light energy to abstract electrons from H(2)O, generating O(2) and a proton gradient subsequently used for ATP formation. It consists of a core antenna complex that captures photons, and an electron transfer chain that converts photonic excitation into a charge separation. This Ephedra sinica (Chinese ephedra) protein is Cytochrome b559 subunit beta.